Reading from the N-terminus, the 378-residue chain is Erythronate-4-phosphate dehydrogenase (378 aa).

Substrate is bound by residues Ser-45 and Thr-66. 2 residues coordinate NAD(+): Asp-146 and Thr-175. Residue Arg-208 is part of the active site. Asp-232 provides a ligand contact to NAD(+). The active site involves Glu-237. Catalysis depends on His-254, which acts as the Proton donor. Residue Gly-257 coordinates NAD(+). Tyr-258 lines the substrate pocket.

It belongs to the D-isomer specific 2-hydroxyacid dehydrogenase family. PdxB subfamily. As to quaternary structure, homodimer.

Its subcellular location is the cytoplasm. The catalysed reaction is 4-phospho-D-erythronate + NAD(+) = (R)-3-hydroxy-2-oxo-4-phosphooxybutanoate + NADH + H(+). The protein operates within cofactor biosynthesis; pyridoxine 5'-phosphate biosynthesis; pyridoxine 5'-phosphate from D-erythrose 4-phosphate: step 2/5. Its function is as follows. Catalyzes the oxidation of erythronate-4-phosphate to 3-hydroxy-2-oxo-4-phosphonooxybutanoate. This is Erythronate-4-phosphate dehydrogenase from Salmonella agona (strain SL483).